Consider the following 264-residue polypeptide: Putative [LysW]-aminoadipate/[LysW]-glutamate kinase (264 aa).

Residues 34 to 35 (GG), Arg-61, and Asn-169 each bind substrate.

It belongs to the acetylglutamate kinase family. LysZ subfamily.

It is found in the cytoplasm. The catalysed reaction is [amino-group carrier protein]-C-terminal-N-(1,4-dicarboxybutan-1-yl)-L-glutamine + ATP = [amino-group carrier protein]-C-terminal-N-(1-carboxy-5-phosphooxy-5-oxopentan-1-yl)-L-glutamine + ADP. It carries out the reaction [amino-group carrier protein]-C-terminal-gamma-(L-glutamyl)-L-glutamate + ATP = [amino-group carrier protein]-C-terminal-gamma-(5-phospho-L-glutamyl)-L-glutamate + ADP. The protein operates within amino-acid biosynthesis; L-lysine biosynthesis via AAA pathway; L-lysine from L-alpha-aminoadipate (Thermus route): step 2/5. Its pathway is amino-acid biosynthesis; L-arginine biosynthesis. Functionally, involved in both the arginine and lysine biosynthetic pathways. Phosphorylates the LysW-bound precursors glutamate (for arginine biosynthesis), respectively alpha-aminoadipate (for lysine biosynthesis). The chain is Putative [LysW]-aminoadipate/[LysW]-glutamate kinase from Ignicoccus hospitalis (strain KIN4/I / DSM 18386 / JCM 14125).